A 699-amino-acid chain; its full sequence is SPS-sensor serine protease component SSY5 (699 aa).

Disordered stretches follow at residues 1 to 113 (MVRF…LQGF) and 128 to 158 (PVKE…ENAR). Positions 1-381 (MVRFFGLNKK…YCVKDYIKKA (381 aa)) are excised as a propeptide. The segment covering 24–38 (NEQNAAETSSSNVSG) has biased composition (polar residues). The segment covering 39–51 (NEERIDPNSHDTN) has biased composition (basic and acidic residues). A compositionally biased stretch (low complexity) spans 61-78 (STTFGSSIQSSSIFSRGR). A compositionally biased stretch (polar residues) spans 83 to 93 (TGASSSMATSE). 2 stretches are compositionally biased toward low complexity: residues 97 to 109 (HSSG…NSKN) and 144 to 154 (SSSTSSTLATS). Residues 459–699 (FAITCAHVVL…QWDIDPQLDG (241 aa)) form a serine protease region. Active-site charge relay system residues include His465, Asp545, and Ser640.

The protein belongs to the peptidase S64 family. As to quaternary structure, component of the plasma membrane SPS (SSY1-PTR3-SSY5) amino acid sensor complex. In terms of processing, the propeptide is autoproteolytically cleaved from the catalytic domain but remains associated, forming an inactive protease complex. This processing occurs even in the absence of signaling.

The protein localises to the cell membrane. In terms of biological role, protease component of the SPS-sensor system, which regulates the expression of several amino acid-metabolizing enzymes and amino acid- and peptide-permeases in response to extracellular amino acid levels by controlling the activity of two transcription factors, STP1 and STP2. Catalyzes the activation of these transcription factors, which are synthesized as latent cytoplasmic precursors, by proteolytic removal of an N-terminal inhibitory domain containing cytoplasmic retention motifs. SSY5 binds as an inactive protease complex to STP1. In response to extracellular amino acids and dependent on the other SPS-sensor components, the inhibitory propeptide is induced to dissociate, and thereby enables the catalytic domain to process STP1. The protein is SPS-sensor serine protease component SSY5 (SSY5) of Saccharomyces cerevisiae (strain ATCC 204508 / S288c) (Baker's yeast).